We begin with the raw amino-acid sequence, 628 residues long: Probable alpha-L-arabinofuranosidase A (628 aa).

The signal sequence occupies residues 1–25 (MVAFSALSGVSAVSLLLSLVQNAHG). N-linked (GlcNAc...) asparagine glycans are attached at residues Asn-36, Asn-51, Asn-74, Asn-152, Asn-171, Asn-260, Asn-359, Asn-440, Asn-493, and Asn-610.

This sequence belongs to the glycosyl hydrolase 51 family.

Its subcellular location is the secreted. It catalyses the reaction Hydrolysis of terminal non-reducing alpha-L-arabinofuranoside residues in alpha-L-arabinosides.. It functions in the pathway glycan metabolism; L-arabinan degradation. In terms of biological role, alpha-L-arabinofuranosidase involved in the degradation of arabinoxylan, a major component of plant hemicellulose. Acts only on small linear 1,5-alpha-linked L-arabinofuranosyl oligosaccharides. The chain is Probable alpha-L-arabinofuranosidase A (abfA) from Aspergillus niger (strain ATCC MYA-4892 / CBS 513.88 / FGSC A1513).